The sequence spans 272 residues: UPF0759 protein YecE (272 aa).

Belongs to the UPF0759 family.

The chain is UPF0759 protein YecE (yecE) from Escherichia coli (strain K12).